A 103-amino-acid chain; its full sequence is Phosphoribosyl-ATP pyrophosphatase (103 aa).

It belongs to the PRA-PH family.

The protein localises to the cytoplasm. The enzyme catalyses 1-(5-phospho-beta-D-ribosyl)-ATP + H2O = 1-(5-phospho-beta-D-ribosyl)-5'-AMP + diphosphate + H(+). It functions in the pathway amino-acid biosynthesis; L-histidine biosynthesis; L-histidine from 5-phospho-alpha-D-ribose 1-diphosphate: step 2/9. The protein is Phosphoribosyl-ATP pyrophosphatase of Cereibacter sphaeroides (strain ATCC 17029 / ATH 2.4.9) (Rhodobacter sphaeroides).